The following is a 159-amino-acid chain: NADH-quinone oxidoreductase subunit I (159 aa).

4Fe-4S ferredoxin-type domains follow at residues 51–80 (RRYE…IEAD) and 90–119 (TRYD…EGPN). Residues Cys60, Cys63, Cys66, Cys70, Cys99, Cys102, Cys105, and Cys109 each coordinate [4Fe-4S] cluster.

The protein belongs to the complex I 23 kDa subunit family. NDH-1 is composed of 14 different subunits. Subunits NuoA, H, J, K, L, M, N constitute the membrane sector of the complex. It depends on [4Fe-4S] cluster as a cofactor.

It is found in the cell inner membrane. The catalysed reaction is a quinone + NADH + 5 H(+)(in) = a quinol + NAD(+) + 4 H(+)(out). Its function is as follows. NDH-1 shuttles electrons from NADH, via FMN and iron-sulfur (Fe-S) centers, to quinones in the respiratory chain. The immediate electron acceptor for the enzyme in this species is believed to be ubiquinone. Couples the redox reaction to proton translocation (for every two electrons transferred, four hydrogen ions are translocated across the cytoplasmic membrane), and thus conserves the redox energy in a proton gradient. The polypeptide is NADH-quinone oxidoreductase subunit I (Rickettsia conorii (strain ATCC VR-613 / Malish 7)).